The sequence spans 142 residues: Neuritin (142 aa).

The N-terminal stretch at 1 to 27 (MGLKLNGRYISLILAVQIAYLVQAVRA) is a signal peptide. Glycine 116 is lipidated: GPI-anchor amidated glycine. The propeptide at 117 to 142 (AAGSLLPAFPVLLVSLSAALATWLSF) is removed in mature form.

This sequence belongs to the neuritin family. As to quaternary structure, component of the outer core of AMPAR complex. AMPAR complex consists of an inner core made of 4 pore-forming GluA/GRIA proteins (GRIA1, GRIA2, GRIA3 and GRIA4) and 4 major auxiliary subunits arranged in a twofold symmetry. One of the two pairs of distinct binding sites is occupied either by CNIH2, CNIH3 or CACNG2, CACNG3. The other harbors CACNG2, CACNG3, CACNG4, CACNG8 or GSG1L. This inner core of AMPAR complex is complemented by outer core constituents binding directly to the GluA/GRIA proteins at sites distinct from the interaction sites of the inner core constituents. Outer core constituents include at least PRRT1, PRRT2, CKAMP44/SHISA9, FRRS1L and NRN1. The proteins of the inner and outer core serve as a platform for other, more peripherally associated AMPAR constituents. Alone or in combination, these auxiliary subunits control the gating and pharmacology of the AMPAR complex and profoundly impact their biogenesis and protein processing.

It is found in the cell membrane. It localises to the synapse. Its function is as follows. Promotes neurite outgrowth and especially branching of neuritic processes in primary hippocampal and cortical cells. The chain is Neuritin (NRN1) from Homo sapiens (Human).